Consider the following 195-residue polypeptide: MAKDEEKNSQASAAPNEGEVKAKQEQTSAKEPAAKAGETEKVADLQKQVEELTKQLDDQKDQNLRAQAEMQNMTKRFKKEQAQLLKYDGQDLAKGILPVLDNLKRALEIEVEDENGQQLKKGIQMVHDHLEKALADHDIKEVEALNQPFDPTTQQAVQTVAASGDQKPDTVVQVLQAGYVLHDRVLRPAMVIVAQ.

Residues 1–60 (MAKDEEKNSQASAAPNEGEVKAKQEQTSAKEPAAKAGETEKVADLQKQVEELTKQLDDQK) form a disordered region. Over residues 37–60 (GETEKVADLQKQVEELTKQLDDQK) the composition is skewed to basic and acidic residues.

It belongs to the GrpE family. As to quaternary structure, homodimer.

It is found in the cytoplasm. Functionally, participates actively in the response to hyperosmotic and heat shock by preventing the aggregation of stress-denatured proteins, in association with DnaK and GrpE. It is the nucleotide exchange factor for DnaK and may function as a thermosensor. Unfolded proteins bind initially to DnaJ; upon interaction with the DnaJ-bound protein, DnaK hydrolyzes its bound ATP, resulting in the formation of a stable complex. GrpE releases ADP from DnaK; ATP binding to DnaK triggers the release of the substrate protein, thus completing the reaction cycle. Several rounds of ATP-dependent interactions between DnaJ, DnaK and GrpE are required for fully efficient folding. This chain is Protein GrpE, found in Limosilactobacillus fermentum (strain NBRC 3956 / LMG 18251) (Lactobacillus fermentum).